The sequence spans 126 residues: Putative regulator AldR (126 aa).

It belongs to the RutC family.

Functionally, implicated in the regulation of isoleucine biosynthesis. This Lactococcus lactis subsp. lactis (strain IL1403) (Streptococcus lactis) protein is Putative regulator AldR (aldR).